A 370-amino-acid polypeptide reads, in one-letter code: Glutamine synthetase (370 aa).

The residue at position 2 (Ala-2) is an N-acetylalanine. Position 5 is a phosphoserine (Ser-5). The GS beta-grasp domain occupies 24-103 (IIAEYVWIDG…VLAACYNNDG (80 aa)). The GS catalytic domain occupies 110–370 (HRHEAAKLFA…MTKEFERESS (261 aa)). Residues Lys-283, Lys-324, and Lys-363 each participate in a glycyl lysine isopeptide (Lys-Gly) (interchain with G-Cter in ubiquitin) cross-link.

The protein belongs to the glutamine synthetase family. Homooctamer.

It is found in the cytoplasm. The catalysed reaction is L-glutamate + NH4(+) + ATP = L-glutamine + ADP + phosphate + H(+). This is Glutamine synthetase (GLN1) from Saccharomyces cerevisiae (strain ATCC 204508 / S288c) (Baker's yeast).